The chain runs to 307 residues: Metapyrocatechase (307 aa).

2 VOC domains span residues 7–122 and 150–269; these read RPGH…LYAD and RFDH…VFCG. Fe cation is bound by residues His-153, His-214, and Glu-265.

This sequence belongs to the extradiol ring-cleavage dioxygenase family. Homotetramer. The cofactor is Fe(2+).

The catalysed reaction is catechol + O2 = (2Z,4E)-2-hydroxy-6-oxohexa-2,4-dienoate + H(+). The protein operates within xenobiotic degradation; toluene degradation. The chain is Metapyrocatechase (xylE) from Pseudomonas putida (Arthrobacter siderocapsulatus).